Reading from the N-terminus, the 1021-residue chain is Ankyrin repeat- and BTB/POZ domain-containing protein 3-A (1021 aa).

A helical transmembrane segment spans residues 160-180; that stretch reads MVLSWTISVNCITAALSALSL. 4 ANK repeats span residues 515–544, 561–590, 599–628, and 642–671; these read QGMT…DINS, RQGT…NVEG, YTET…DPLI, and GEMN…KDKG. Residues 836 to 902 enclose the BTB domain; that stretch reads SDVTFLVEGK…LYCGGTESLH (67 aa).

The protein resides in the membrane. The protein is Ankyrin repeat- and BTB/POZ domain-containing protein 3-A (abtb3a) of Danio rerio (Zebrafish).